The following is a 182-amino-acid chain: Inner membrane-spanning protein YciB (182 aa).

5 helical membrane-spanning segments follow: residues 20–42, 55–75, 76–96, 123–143, and 153–173; these read GGIYQATIVAMVATIVQILWVYY, LIMIMVFGSLTIFLHDSTFIL, LKPTALYWLFSGVLFVSAQFF, LNLAWSAFFFFMGFLNLYIAF, and FKLFGSTGLLIAFVIAQGFWM.

Belongs to the YciB family.

The protein resides in the cell inner membrane. Plays a role in cell envelope biogenesis, maintenance of cell envelope integrity and membrane homeostasis. The sequence is that of Inner membrane-spanning protein YciB from Polynucleobacter asymbioticus (strain DSM 18221 / CIP 109841 / QLW-P1DMWA-1) (Polynucleobacter necessarius subsp. asymbioticus).